The chain runs to 952 residues: Lysosomal alpha-glucosidase (952 aa).

The first 27 residues, 1–27 (MRVRHPPCSRRLLAICALVSLATAALL), serve as a signal peptide directing secretion. The propeptide occupies 28 to 69 (GHILLHDFLLVPRELSGSSPVLEETHPAHQQGASRPGPRDAQ). The tract at residues 47 to 80 (PVLEETHPAHQQGASRPGPRDAQAHLGRPRAVPT) is disordered. In terms of domain architecture, P-type spans 80–131 (TQCDVPPNSRFDCAPDKAITREQCDARGCCYIPAKQGLRGAQMGQPWCFFPP). 3 disulfides stabilise this stretch: Cys-82-Cys-109, Cys-92-Cys-108, and Cys-103-Cys-127. Asn-140, Asn-233, and Asn-390 each carry an N-linked (GlcNAc...) asparagine glycan. Asp-404 is a binding site for substrate. N-linked (GlcNAc...) asparagine glycosylation occurs at Asn-470. Residue Asp-518 is the Nucleophile of the active site. The active site involves Glu-521. A disulfide bond links Cys-533 and Cys-558. Arg-600 and Asp-616 together coordinate substrate. A disulfide bond links Cys-647 and Cys-658. An N-linked (GlcNAc...) asparagine glycan is attached at Asn-652. His-674 contacts substrate. N-linked (GlcNAc...) asparagine glycans are attached at residues Asn-882 and Asn-925.

It belongs to the glycosyl hydrolase 31 family.

It localises to the lysosome. It is found in the lysosome membrane. It carries out the reaction Hydrolysis of terminal, non-reducing (1-&gt;4)-linked alpha-D-glucose residues with release of alpha-D-glucose.. Functionally, essential for the degradation of glycogen in lysosomes. Has highest activity on alpha-1,4-linked glycosidic linkages, but can also hydrolyze alpha-1,6-linked glucans. The protein is Lysosomal alpha-glucosidase (GAA) of Pongo abelii (Sumatran orangutan).